The following is a 139-amino-acid chain: Putative nickel-responsive regulator (139 aa).

Positions 79, 90, 92, and 98 each coordinate Ni(2+).

Belongs to the transcriptional regulatory CopG/NikR family. Requires Ni(2+) as cofactor.

Functionally, transcriptional regulator. The polypeptide is Putative nickel-responsive regulator (Solidesulfovibrio magneticus (strain ATCC 700980 / DSM 13731 / RS-1) (Desulfovibrio magneticus)).